The following is a 1151-amino-acid chain: MSRRKQSKPRQIKRPLEDAIEDEEEECPSEETDIISKGDFPLEESFSTEFGPENLSCEEVEYFCNKGDDEGIQETAESDGDTQSEKPGQPGVETDDWDGPGELEVFQKDGERKIQSRQQLPVGTTWGPFPGKMDLNNNSLKTKAQVPMVLTAGPKWLLDVTWQGVEDNKNNCIVYSKGGQLWCTTTKAISEGEELIAFVVDFDSRLQAASQMTLTEGMYPARLLDSIQLLPQQAAMASILPTAIVNKDIFPCKSCGIWYRSERNLQAHLMYYCSGRQREAAPVSEENEDSAHQISSLCPFPQCTKSFSNARALEMHLNSHSGVKMEEFLPPGASLKCTVCSYTADSVINFHQHLFSHLTQAAFRCNHCHFGFQTQRELLQHQELHVPSGKLPRESDMEHSPSATEDSLQPATDLLTRSELPQSQKAMQTKDASSDTELDKCEKKTQLFLTNQRPEIQPTTNKQSFSYTKIKSEPSSPRLASSPVQPNIGPSFPVGPFLSQFSFPQDITMVPQASEILAKMSELVHRRLRHGSSSYPPVIYSPLMPKGATCFECNITFNNLDNYLVHKKHYCSSRWQQMAKSPEFPSVSEKMPEALSPNTGQTSINLLNPAAHSADPENPLLQTSCINSSTVLDLIGPNGKGHDKDFSTQTKKLSTSSNNDDKINGKPVDVKNPSVPLVDGESDPNKTTCEACNITFSRHETYMVHKQYYCATRHDPPLKRSASNKVPAMQRTMRTRKRRKMYEMCLPEQEQRPPLVQQRFLDVANLNNPCTSTQEPTEGLGECYHPRCDIFPGIVSKHLETSLTINKCVPVSKCDTTHSSVSCLEMDVPIDLSKKCLSQSERTTTSPKRLLDYHECTVCKISFNKVENYLAHKQNFCPVTAHQRNDLGQLDGKVFPNPESERNSPDVSYERSIIKCEKNGNLKQPSPNGNLFSSHLATLQGLKVFSEAAQLIATKEENRHLFLPQCLYPGAIKKAKGADQLSPYYGIKPSDYISGSLVIHNTDIEQSRNAENESPKGQASSNGCAALKKDSLPLLPKNRGMVIVNGGLKQDERPAANPQQENISQNPQHEDDHKSPSWISENPLAANENVSPGIPSAEEQLSSIAKGVNGSSQAPTSGKYCRLCDIQFNNLSNFITHKKFYCSSHAAEHVK.

Basic residues predominate over residues 1 to 13; it reads MSRRKQSKPRQIK. The interval 1–102 is disordered; sequence MSRRKQSKPR…ETDDWDGPGE (102 aa). Acidic residues-rich tracts occupy residues 18–33 and 70–82; these read DAIE…EETD and EGIQ…DGDT. Residues 244-277 form a CCHC FOG-type 1 zinc finger; it reads IVNKDIFPCKSCGIWYRSERNLQAHLMYYCSGRQ. Cysteine 252, cysteine 255, histidine 268, and cysteine 273 together coordinate Zn(2+). The segment at 296–320 adopts a C2H2-type 1 zinc-finger fold; it reads SLCPFPQCTKSFSNARALEMHLNSH. Residue lysine 324 forms a Glycyl lysine isopeptide (Lys-Gly) (interchain with G-Cter in SUMO1) linkage. C2H2-type zinc fingers lie at residues 335-357 and 363-385; these read LKCT…LFSH and FRCN…QELH. Residues 389-487 form a disordered region; sequence GKLPRESDME…RLASSPVQPN (99 aa). Composition is skewed to polar residues over residues 401-410 and 419-431; these read PSATEDSLQP and ELPQ…QTKD. Lysine 444 is covalently cross-linked (Glycyl lysine isopeptide (Lys-Gly) (interchain with G-Cter in SUMO2)). Residues 447-485 are compositionally biased toward polar residues; the sequence is LFLTNQRPEIQPTTNKQSFSYTKIKSEPSSPRLASSPVQ. Residue lysine 471 forms a Glycyl lysine isopeptide (Lys-Gly) (interchain with G-Cter in SUMO1) linkage. Phosphoserine is present on serine 532. Residues 542-575 form a CCHC FOG-type 2 zinc finger; that stretch reads PLMPKGATCFECNITFNNLDNYLVHKKHYCSSRW. 4 residues coordinate Zn(2+): cysteine 550, cysteine 553, histidine 566, and cysteine 571. Residue serine 581 is modified to Phosphoserine. Positions 636-683 are disordered; that stretch reads GPNGKGHDKDFSTQTKKLSTSSNNDDKINGKPVDVKNPSVPLVDGESD. Positions 647–658 are enriched in polar residues; it reads STQTKKLSTSSN. A CCHC FOG-type 3 zinc finger spans residues 681 to 714; sequence ESDPNKTTCEACNITFSRHETYMVHKQYYCATRH. 4 residues coordinate Zn(2+): cysteine 689, cysteine 692, histidine 705, and cysteine 710. Positions 736–740 match the Nuclear localization signal motif; sequence RKRRK. Positions 829 to 835 are interaction with CTBP2; it reads PIDLSKK. Residues 848–881 form a CCHC FOG-type 4 zinc finger; that stretch reads KRLLDYHECTVCKISFNKVENYLAHKQNFCPVTA. Zn(2+) is bound by residues cysteine 856, cysteine 859, histidine 872, and cysteine 877. Serine 904 is subject to Phosphoserine. Glycyl lysine isopeptide (Lys-Gly) (interchain with G-Cter in SUMO1) cross-links involve residues lysine 915 and lysine 955. Position 1014 is a phosphoserine (serine 1014). The interval 1051 to 1095 is disordered; sequence DERPAANPQQENISQNPQHEDDHKSPSWISENPLAANENVSPGIP. Over residues 1057-1067 the composition is skewed to polar residues; it reads NPQQENISQNP. The CCHC FOG-type 5 zinc finger occupies 1113-1146; that stretch reads QAPTSGKYCRLCDIQFNNLSNFITHKKFYCSSHA. Positions 1121, 1124, 1137, and 1142 each coordinate Zn(2+).

Belongs to the FOG (Friend of GATA) family. Interacts with the N-terminal zinc-finger of GATA4, GATA5 and probably GATA6. Interacts with retinoid nuclear receptor RXRA when ligand bound. Interacts with corepressor CTBP2; this interaction is however not essential for corepressor activity. Able to bind GATA1 in vitro. Interacts with NR2F2 and NR2F6. Interacts with ATOH8; mediates indirect interaction with GATA4. In terms of processing, sumoylation reduces transcriptional repression activity. In terms of tissue distribution, widely expressed at low level.

The protein resides in the nucleus. In terms of biological role, transcription regulator that plays a central role in heart morphogenesis and development of coronary vessels from epicardium, by regulating genes that are essential during cardiogenesis. Essential cofactor that acts via the formation of a heterodimer with transcription factors of the GATA family GATA4, GATA5 and GATA6. Such heterodimer can both activate or repress transcriptional activity, depending on the cell and promoter context. Also required in gonadal differentiation, possibly be regulating expression of SRY. Probably acts a corepressor of NR2F2. The protein is Zinc finger protein ZFPM2 (ZFPM2) of Homo sapiens (Human).